The primary structure comprises 48 residues: MMGREHDKQAQFTPDHLGTKPVAYKRNKGKKMHNKSNEQPDVIQTKGE.

The disordered stretch occupies residues 1-48; that stretch reads MMGREHDKQAQFTPDHLGTKPVAYKRNKGKKMHNKSNEQPDVIQTKGE. A compositionally biased stretch (basic residues) spans 23–34; it reads AYKRNKGKKMHN.

It belongs to the SspN family.

Its subcellular location is the spore core. The polypeptide is Small, acid-soluble spore protein N (Bacillus pumilus (strain SAFR-032)).